Reading from the N-terminus, the 423-residue chain is Growth hormone-releasing hormone receptor (423 aa).

The N-terminal stretch at 1-22 (MDSGVWAACIFCLLSSLPVALG) is a signal peptide. The Extracellular portion of the chain corresponds to 23–130 (HVHPECDFIT…DEKSYFSTVR (108 aa)). 3 disulfide bridges follow: Cys-41-Cys-64, Cys-55-Cys-96, and Cys-78-Cys-112. The N-linked (GlcNAc...) asparagine glycan is linked to Asn-50. A helical membrane pass occupies residues 131–151 (IVYTTGHSVSAVALFVAIAIL). Topologically, residues 152-167 (VALRRLHCPRNYIHSQ) are cytoplasmic. A helical transmembrane segment spans residues 168–188 (LFATFILKAGAVFLKDAALFH). The Extracellular segment spans residues 189 to 210 (SENTDHCSFSTVLCKVSVATSH). Residues 211–231 (FATMTNFSWLLAEAVYLTCLL) traverse the membrane as a helical segment. The Cytoplasmic portion of the chain corresponds to 232-240 (ASTSPSTRR). The chain crosses the membrane as a helical span at residues 241-261 (AFWWLVLAGWGLPLLFTGTWV). At 262-283 (GCKLAFEDVACWDLDDSSPYWW) the chain is on the extracellular side. Residues 284-304 (IIKGPIVLSVGVNFGLFLNII) form a helical membrane-spanning segment. The Cytoplasmic segment spans residues 305 to 331 (RILLRKLEPAQGSLHTQPQYWRLSKST). The helical transmembrane segment at 332-352 (LLLIPLFGIHYVIFNFLPDSA) threads the bilayer. Over 353–357 (GLGIR) the chain is Extracellular. Residues 358–378 (LPLELGLGSFQGFIVAILYCF) form a helical membrane-spanning segment. At 379–423 (LNQEVRTEISRRWHGHDPELLPAWRTHAKWAKPSRSRAKVLTTVC) the chain is on the cytoplasmic side.

The protein belongs to the G-protein coupled receptor 2 family. In terms of tissue distribution, pituitary gland. Also detected in the lymphocytes and thymocytes.

Its subcellular location is the cell membrane. Its function is as follows. Receptor for GRF, coupled to G proteins which activate adenylyl cyclase. Stimulates somatotroph cell growth, growth hormone gene transcription and growth hormone secretion. The polypeptide is Growth hormone-releasing hormone receptor (GHRHR) (Sus scrofa (Pig)).